The sequence spans 123 residues: MARIAGVDLPRDKRVEIALTYIYGIGKPTSQKILAQSGVNPDTRVRNLTEEEINKLRDIIEKNYKVEGDLRREVALNIKRLIEIGCYRGLRHRRGLPVRGQRTKTNARTRKGPRKTVGVRRKK.

The segment at 97 to 123 (PVRGQRTKTNARTRKGPRKTVGVRRKK) is disordered.

This sequence belongs to the universal ribosomal protein uS13 family. Part of the 30S ribosomal subunit. Forms a loose heterodimer with protein S19. Forms two bridges to the 50S subunit in the 70S ribosome.

Located at the top of the head of the 30S subunit, it contacts several helices of the 16S rRNA. In the 70S ribosome it contacts the 23S rRNA (bridge B1a) and protein L5 of the 50S subunit (bridge B1b), connecting the 2 subunits; these bridges are implicated in subunit movement. Contacts the tRNAs in the A and P-sites. This chain is Small ribosomal subunit protein uS13, found in Pelotomaculum thermopropionicum (strain DSM 13744 / JCM 10971 / SI).